The chain runs to 356 residues: Dual-specificity RNA methyltransferase RlmN (356 aa).

E89 (proton acceptor) is an active-site residue. Residues 108–341 (SHARYTICVS…CTIRESKGLD (234 aa)) form the Radical SAM core domain. The cysteines at positions 115 and 346 are disulfide-linked. Residues C122, C126, and C129 each contribute to the [4Fe-4S] cluster site. Residues 172–173 (GE), S204, 227–229 (SLH), and N303 contribute to the S-adenosyl-L-methionine site. The S-methylcysteine intermediate role is filled by C346.

Belongs to the radical SAM superfamily. RlmN family. The cofactor is [4Fe-4S] cluster.

It is found in the cytoplasm. The enzyme catalyses adenosine(2503) in 23S rRNA + 2 reduced [2Fe-2S]-[ferredoxin] + 2 S-adenosyl-L-methionine = 2-methyladenosine(2503) in 23S rRNA + 5'-deoxyadenosine + L-methionine + 2 oxidized [2Fe-2S]-[ferredoxin] + S-adenosyl-L-homocysteine. It catalyses the reaction adenosine(37) in tRNA + 2 reduced [2Fe-2S]-[ferredoxin] + 2 S-adenosyl-L-methionine = 2-methyladenosine(37) in tRNA + 5'-deoxyadenosine + L-methionine + 2 oxidized [2Fe-2S]-[ferredoxin] + S-adenosyl-L-homocysteine. In terms of biological role, specifically methylates position 2 of adenine 2503 in 23S rRNA and position 2 of adenine 37 in tRNAs. m2A2503 modification seems to play a crucial role in the proofreading step occurring at the peptidyl transferase center and thus would serve to optimize ribosomal fidelity. The protein is Dual-specificity RNA methyltransferase RlmN of Campylobacter jejuni subsp. jejuni serotype O:23/36 (strain 81-176).